We begin with the raw amino-acid sequence, 213 residues long: MSSGAGSRRPREPPEHELQRRREQKRRRHDAQQLQQLKHLESFYEKPPPGFIKEDETKPEDCIPDVPGNEHAREFLAHAPTKGLWMPLGREVKVMQCWRCKRYGHRTGDKECPFFIKGNQKLEQFRVAHEDPMYDIIRENKRHEKDVRIQQLKQLLEDSTSDDDGSSSSSSGDREKRKKRKKKEKHKKRKKEKKKKKKRKHKASKSSESSDSE.

Positions 1–61 (MSSGAGSRRP…IKEDETKPED (61 aa)) are disordered. The interval 1–147 (MSSGAGSRRP…RENKRHEKDV (147 aa)) is PIM1-binding. Composition is skewed to basic and acidic residues over residues 9-21 (RPRE…LQRR) and 52-61 (IKEDETKPED). The CCHC-type zinc-finger motif lies at 96–114 (QCWRCKRYGHRTGDKECPF). Lys-121 is covalently cross-linked (Glycyl lysine isopeptide (Lys-Gly) (interchain with G-Cter in SUMO2)). The tract at residues 154–213 (QLLEDSTSDDDGSSSSSSGDREKRKKRKKKEKHKKRKKEKKKKKKRKHKASKSSESSDSE) is disordered. Residues 176-204 (KRKKRKKKEKHKKRKKEKKKKKKRKHKAS) are compositionally biased toward basic residues. 2 positions are modified to phosphoserine; by PIM1; in vitro: Ser-204 and Ser-206.

In terms of assembly, binds to PIM1. Binds to ZNHIT4. In terms of tissue distribution, highly expressed in the testis, moderately in the kidney, liver and spleen, and weakly in the skeletal muscle and heart.

It is found in the nucleus. Its function is as follows. Is thought to be a target protein for the PIM1 kinase. May play some roles in B-cell proliferation in association with PIM1. The protein is Retinitis pigmentosa 9 protein homolog (rp9) of Mus musculus (Mouse).